The primary structure comprises 349 residues: Phosphorylcholine phosphatase (349 aa).

The signal sequence occupies residues 1–22 (MTFAKGILAALALAAAVGQASA). The active-site Nucleophile is Asp53. Residues Asp53 and Asp55 each coordinate Mg(2+). Asp55 (proton donor) is an active-site residue. Cysteines 109 and 116 form a disulfide. Asp284 contacts Mg(2+).

The protein belongs to the HAD-like hydrolase superfamily. In terms of assembly, monomer. Homodimer. Homotetramer. The cofactor is Mg(2+).

The protein resides in the periplasm. The enzyme catalyses phosphocholine + H2O = choline + phosphate. It catalyses the reaction phosphoethanolamine + H2O = ethanolamine + phosphate. With respect to regulation, activity is inhibited by high concentrations of phosphorylcholine, phosphorylethanolamine, choline or betaine. Displays different properties depending on the substrate utilized, the pH conditions as well as the presence or absence of metal ions. At pH 5, activity is inhibited by Al(3+) ions. At pH 7.4, the enzyme cannot catalyze the hydrolysis of pNPP, phosphorylethanolamine is a poor substrate in either the presence or absence of divalent cations, and activity measured with phosphorylcholine is independent of divalent cations or is not inhibited by Al(3+) ions. Mg(2+) produces identical activation at pH 5.0 and 7.4, but Zn(2+) is an activator at pH 5.0 and becomes an inhibitor at pH 7.4. This inhibition at pH 7.4 may be due to a transition from octahedral to tetrahedral coordination geometry, which is produced by hydrolysis of the Zn-hexacoordinated complex. In terms of biological role, catalyzes the hydrolysis of phosphorylcholine (PCho) to produce choline and inorganic phosphate. Can also hydrolyze phosphorylethanolamine and the nonphysiological substrate p-nitrophenylphosphate (pNPP). Shows higher affinity and catalytic efficiency with phosphorylcholine as substrate. Is probably involved in virulence. The bacteria may break down various host compounds or host cell membranes through the coordinated action of phospholipase C and phosphocholine phosphatase. The final consequence of the action of these enzymes is an increase of the free choline concentration, which may promote the pathogenicity of P.aeruginosa. The protein is Phosphorylcholine phosphatase of Pseudomonas aeruginosa (strain ATCC 15692 / DSM 22644 / CIP 104116 / JCM 14847 / LMG 12228 / 1C / PRS 101 / PAO1).